The following is a 262-amino-acid chain: Small ribosomal subunit protein eS4 (262 aa).

Residues 42–104 (LPLLIFLRNR…TGEFFRLIYD (63 aa)) enclose the S4 RNA-binding domain.

This sequence belongs to the eukaryotic ribosomal protein eS4 family.

This is Small ribosomal subunit protein eS4 (RpS4) from Lysiphlebus testaceipes (Greenbugs aphid parastoid).